The primary structure comprises 158 residues: C-type lectin galactose-binding isoform (158 aa).

A signal peptide spans 1–23 (MGRFLLVTLSLLVMAFFLNGANS). Cystine bridges form between cysteine 26-cysteine 37, cysteine 54-cysteine 154, and cysteine 129-cysteine 146. In terms of domain architecture, C-type lectin spans 33 to 155 (RNGFCYKVFN…CTALRPFLCQ (123 aa)). Positions 119, 121, and 127 each coordinate Ca(2+). The Galactose-binding signature appears at 119–121 (QPD). Asparagine 134 carries N-linked (GlcNAc...) asparagine glycosylation. Ca(2+) is bound by residues asparagine 142 and aspartate 143.

It belongs to the true venom lectin family. As to quaternary structure, dimer. Probably disulfide-linked homodimer. As to expression, expressed by the venom gland.

It localises to the secreted. Functionally, galactose-binding lectin that binds to and agglutinates erythrocytes in a calcium-dependent manner. This Pseudechis australis (Mulga snake) protein is C-type lectin galactose-binding isoform.